The sequence spans 345 residues: Methylthioribose-1-phosphate isomerase (345 aa).

Residues 44 to 46 (RGA), Arg-86, and Gln-194 each bind substrate. Catalysis depends on Asp-235, which acts as the Proton donor. 245-246 (NK) lines the substrate pocket.

The protein belongs to the eIF-2B alpha/beta/delta subunits family. MtnA subfamily.

The enzyme catalyses 5-(methylsulfanyl)-alpha-D-ribose 1-phosphate = 5-(methylsulfanyl)-D-ribulose 1-phosphate. It participates in amino-acid biosynthesis; L-methionine biosynthesis via salvage pathway; L-methionine from S-methyl-5-thio-alpha-D-ribose 1-phosphate: step 1/6. Functionally, catalyzes the interconversion of methylthioribose-1-phosphate (MTR-1-P) into methylthioribulose-1-phosphate (MTRu-1-P). The sequence is that of Methylthioribose-1-phosphate isomerase from Desulfitobacterium hafniense (strain Y51).